We begin with the raw amino-acid sequence, 107 residues long: Ig kappa chain V-VI region J539 (107 aa).

The segment at 1–23 (EIVLTQSPAITAASLGQKVTITC) is framework-1. An intrachain disulfide couples Cys-23 to Cys-87. The interval 24 to 33 (SASSSVSSLH) is complementarity-determining-1. Residues 34–48 (WYQQKSGTSPKPWIY) are framework-2. The complementarity-determining-2 stretch occupies residues 49–55 (EISKLAS). A framework-3 region spans residues 56 to 87 (GVPARFSGSGSGTSYSLTINTMEAEDAAIYYC). The tract at residues 88-96 (QQWTYPLIT) is complementarity-determining-3. The interval 97-106 (FGAGTKLELK) is framework-4.

The protein is Ig kappa chain V-VI region J539 of Mus musculus (Mouse).